We begin with the raw amino-acid sequence, 213 residues long: Adenylate kinase (213 aa).

Position 14 to 19 (14 to 19 (GSGKGT)) interacts with ATP. Residues 34 to 63 (SSGNLLRSAIKASTPLGIKASEYIDEGQLV) are NMP. AMP contacts are provided by residues serine 35, arginine 40, 61 to 63 (QLV), 89 to 92 (GFPR), and glutamine 96. The interval 129–162 (SRFICPSCNFVYNQSQGFRECPTCHSELVRRSDD) is LID. Arginine 130 contributes to the ATP binding site. Zn(2+) is bound by residues cysteine 133 and cysteine 136. ATP is bound at residue 139–140 (VY). Residues cysteine 149 and cysteine 152 each contribute to the Zn(2+) site. AMP-binding residues include arginine 159 and arginine 170. Residue lysine 198 coordinates ATP.

It belongs to the adenylate kinase family. In terms of assembly, monomer.

It localises to the cytoplasm. It carries out the reaction AMP + ATP = 2 ADP. Its pathway is purine metabolism; AMP biosynthesis via salvage pathway; AMP from ADP: step 1/1. Functionally, catalyzes the reversible transfer of the terminal phosphate group between ATP and AMP. Plays an important role in cellular energy homeostasis and in adenine nucleotide metabolism. This chain is Adenylate kinase, found in Chlamydia felis (strain Fe/C-56) (Chlamydophila felis).